The primary structure comprises 312 residues: Taste receptor type 2 member 140 (312 aa).

Topologically, residues 1–9 (MKVTVECAL) are extracellular. The chain crosses the membrane as a helical span at residues 10 to 30 (LITLIVEIIIGCLGNGFIAVV). Residues 31–46 (NIMDWTKRRRFSLVDQ) lie on the Cytoplasmic side of the membrane. A helical transmembrane segment spans residues 47–67 (ILTALAISRLAFVWSLLTVLV). The Extracellular segment spans residues 68–87 (ISELHSSLLITRKMLRIINN). A helical membrane pass occupies residues 88–108 (FWTVTNHFSIWLATCLSIFYF). Topologically, residues 109–133 (LKIANFSNSIFLSLRWRVKTVVSLT) are cytoplasmic. Residues 134–154 (LLVSLLLLLVNVIIINTCIVI) traverse the membrane as a helical segment. The Extracellular segment spans residues 155-185 (SVEGYKVNMSYSSHFNNNPQISRIPLFTNTM). Residue N162 is glycosylated (N-linked (GlcNAc...) asparagine). Residues 186 to 206 (FTFIPFTVTLTIFLLLIFSLW) form a helical membrane-spanning segment. At 207–229 (RHLKKMQHRAKGPRDPSTTAHIK) the chain is on the cytoplasmic side. Residues 230–250 (ALQMVVTFLFLYTIFFLALVM) form a helical membrane-spanning segment. At 251–264 (QAWNNEIQSKTVFN) the chain is on the extracellular side. The chain crosses the membrane as a helical span at residues 265–285 (LVFESIALAFPSGHSCVLILG). Topologically, residues 286–312 (NSKLRQAFLTIIWWLRSSFNAAELSSP) are cytoplasmic.

This sequence belongs to the G-protein coupled receptor T2R family.

Its subcellular location is the membrane. Its function is as follows. Putative taste receptor which may play a role in the perception of bitterness. This is Taste receptor type 2 member 140 from Rattus norvegicus (Rat).